A 241-amino-acid chain; its full sequence is Ribonuclease PH (241 aa).

Residues Arg-89 and 127–129 (GTR) each bind phosphate.

This sequence belongs to the RNase PH family. In terms of assembly, homohexameric ring arranged as a trimer of dimers.

It catalyses the reaction tRNA(n+1) + phosphate = tRNA(n) + a ribonucleoside 5'-diphosphate. Functionally, phosphorolytic 3'-5' exoribonuclease that plays an important role in tRNA 3'-end maturation. Removes nucleotide residues following the 3'-CCA terminus of tRNAs; can also add nucleotides to the ends of RNA molecules by using nucleoside diphosphates as substrates, but this may not be physiologically important. Probably plays a role in initiation of 16S rRNA degradation (leading to ribosome degradation) during starvation. This chain is Ribonuclease PH, found in Xanthomonas oryzae pv. oryzae (strain MAFF 311018).